A 635-amino-acid chain; its full sequence is Threonine--tRNA ligase (635 aa).

A TGS domain is found at 1 to 58 (MIHVTCNQEAFELPEGASAMDLANKMKQSHCFAGALINDQEKDLSTTLQDGDTVLFLT). The catalytic stretch occupies residues 237–528 (DHRVLGTKLD…LIEHFKGRFP (292 aa)). Residues cysteine 328, histidine 379, and histidine 505 each coordinate Zn(2+).

It belongs to the class-II aminoacyl-tRNA synthetase family. Homodimer. It depends on Zn(2+) as a cofactor.

The protein resides in the cytoplasm. It catalyses the reaction tRNA(Thr) + L-threonine + ATP = L-threonyl-tRNA(Thr) + AMP + diphosphate + H(+). In terms of biological role, catalyzes the attachment of threonine to tRNA(Thr) in a two-step reaction: L-threonine is first activated by ATP to form Thr-AMP and then transferred to the acceptor end of tRNA(Thr). Also edits incorrectly charged L-seryl-tRNA(Thr). This chain is Threonine--tRNA ligase, found in Chlamydia trachomatis serovar A (strain ATCC VR-571B / DSM 19440 / HAR-13).